A 239-amino-acid polypeptide reads, in one-letter code: Adapter protein MecA (239 aa).

A compositionally biased stretch (basic and acidic residues) spans Glu118–Gly128. The interval Glu118–Arg137 is disordered.

Belongs to the MecA family. Homodimer.

Functionally, enables the recognition and targeting of unfolded and aggregated proteins to the ClpC protease or to other proteins involved in proteolysis. The sequence is that of Adapter protein MecA from Staphylococcus aureus (strain COL).